Here is a 37-residue protein sequence, read N- to C-terminus: Protein YnaM (37 aa).

The helical transmembrane segment at 4 to 24 (ILIITSLLIIFSIFSHALIKL) threads the bilayer.

The protein localises to the cell inner membrane. The polypeptide is Protein YnaM (Escherichia coli (strain K12)).